Consider the following 302-residue polypeptide: Probable alpha-L-glutamate ligase (302 aa).

An ATP-grasp domain is found at 104–287; sequence MQLLSREGVG…VAGMIIEFIE (184 aa). ATP is bound by residues Lys141, 178 to 179, Asp187, and 211 to 213; these read EF and RSN. Asp248, Glu260, and Asn262 together coordinate Mg(2+). 3 residues coordinate Mn(2+): Asp248, Glu260, and Asn262.

Belongs to the RimK family. Mg(2+) serves as cofactor. It depends on Mn(2+) as a cofactor.

The protein is Probable alpha-L-glutamate ligase of Halorhodospira halophila (strain DSM 244 / SL1) (Ectothiorhodospira halophila (strain DSM 244 / SL1)).